The following is a 372-amino-acid chain: Chaperone protein DnaJ (372 aa).

Positions 5–70 (DYYEVLGVAK…DKRAAYDQFG (66 aa)) constitute a J domain. The CR-type zinc-finger motif lies at 133 to 211 (GTETKIRIPT…CHGEGRVKKH (79 aa)). 8 residues coordinate Zn(2+): cysteine 146, cysteine 149, cysteine 163, cysteine 166, cysteine 185, cysteine 188, cysteine 199, and cysteine 202. CXXCXGXG motif repeat units follow at residues 146–153 (CGTCHGSG), 163–170 (CSACGGHG), 185–192 (CPRCGGTG), and 199–206 (CPSCHGEG).

Belongs to the DnaJ family. Homodimer. Zn(2+) serves as cofactor.

Its subcellular location is the cytoplasm. In terms of biological role, participates actively in the response to hyperosmotic and heat shock by preventing the aggregation of stress-denatured proteins and by disaggregating proteins, also in an autonomous, DnaK-independent fashion. Unfolded proteins bind initially to DnaJ; upon interaction with the DnaJ-bound protein, DnaK hydrolyzes its bound ATP, resulting in the formation of a stable complex. GrpE releases ADP from DnaK; ATP binding to DnaK triggers the release of the substrate protein, thus completing the reaction cycle. Several rounds of ATP-dependent interactions between DnaJ, DnaK and GrpE are required for fully efficient folding. Also involved, together with DnaK and GrpE, in the DNA replication of plasmids through activation of initiation proteins. The sequence is that of Chaperone protein DnaJ from Thiobacillus denitrificans (strain ATCC 25259 / T1).